A 149-amino-acid chain; its full sequence is Calmodulin-2 (149 aa).

Alanine 2 carries the N-acetylalanine modification. EF-hand domains lie at 8–43 (EQIAEFKEAFSLFDKDGDGTITTKELGTVMRSLGQN), 44–79 (PTEAELQDMINEVDADGNGTIDFPEFLTMMARKMKD), 81–116 (DSEEEIREAFRVFDKDGNGFISAAELRHVMTNLGEK), and 117–149 (LTDEEVDEMVREADIDGDGQVNYEEFVEMMTSK). Ca(2+) contacts are provided by aspartate 21, aspartate 23, aspartate 25, threonine 27, glutamate 32, aspartate 57, aspartate 59, asparagine 61, threonine 63, glutamate 68, aspartate 94, aspartate 96, asparagine 98, and glutamate 105. Lysine 116 carries the post-translational modification N6,N6,N6-trimethyllysine. Ca(2+)-binding residues include aspartate 130, aspartate 132, aspartate 134, glutamine 136, and glutamate 141.

It belongs to the calmodulin family.

In terms of biological role, calmodulin mediates the control of a large number of enzymes, ion channels and other proteins by Ca(2+). Among the enzymes to be stimulated by the calmodulin-Ca(2+) complex are a number of protein kinases and phosphatases. This Branchiostoma lanceolatum (Common lancelet) protein is Calmodulin-2 (CAM2).